The following is a 1435-amino-acid chain: MGARASVLSGGELDRWEKIRLRPGGKKKYKLKHIVWASRELERFAVNPSLLETSEGCRQILGQLQSSLQTGSEELKSLYNTVATLYCVHQRIEVKDTKEALDKIEEEQNKSKKKAQQAAADTGNSSQVSQNYPIVQNIQGQMVHQAISPRTLNAWVKVVEEKAFSPEVIPMFSALSEGATPQDLNTMLNTVGGHQAAMQMLKETINEEAAEWDRLHPVQAGPVAPGQMREPRGSDIAGTTSTLQEQIGWMTNNPPIPVGEIYKRWIILGLNKIVRMYSPSSILDIKQGPKEPFRDYVDRFYKTLRAEQASQEVKNWMTETLLVQNANPDCKTILKALGPGATLEEMMTACQGVGGPGHKARVLAEAMSQVTNSATIMMQRGNFRNQRKTVKCFNCGKEGHIAKNCRAPRKKGCWKCGKEGHQMKDCTERQANFFRENLAFPQGKAREFSSEQTRANSPTRRELQVWGGDNNSLSEAGADRQGTVSLSFPQITLWQRPLVTIKVGGQLKEALLDTGADDTVLEDMSLPGRWKPKMIGGIGGFIKVRQYEQIDIEICGHKAKGTVLVGPTPVNIIGRNLLTQIGCTLNFPISPIETVPVKLKPGMDGPKVKQWPLTEEKIKALVEICTEMEKEGKISKIGPENPYNTPVFAIKKKDSTKWRKLVDFRELNKRTQDFWEVQLGIPHPAGLKKKKSVTVLDVGDAYFSVPLDEDFRKYTAFTIPSINNETPGIRYQYNVLPQGWKGSPAIFQSSMTKILEPFRKQNPDIVIYQYMDDLYVGSDLEIGQHRAKIEDLRQHLLKWGFTTPDKKHQKEPPFLWMGYELHPDKWTVQPIVLPEKDSWTVNDIQKLVGKLNWASQIYAGIKVKQLCKLLRGTKALTEVVPLTEEAELELAENREILKEPVHGVYYDPTKDLIAELQKQGQGQWTYQIYQEPYKNLKTGKYARMRGAHTNDVKQLTEAVQKIATESIVIWGKTPKFKLPIQKETWEAWWTDYWQATWIPEWEFVNTPPLVKLWYQLEKEPIVGAETFYVDGAANRDTKSGKAGYVTDRGRQKVVSLADTTNQKTELQAIHLALQDSGLEVNIVTDSQYALGIIQAQPDKSESELVSQIIEQLIKKEKVYLAWVPAHKGIGGNEQVDKLVSAGIRKVLFLDGIDKAQEEHEKYHTNWRAMASDFNLPPVVAKEIVASCNKCQLKGEAMHGQVDCSPGIWQLDCTHLEGKVILVAVHVASGYIEAEVIPAETGQETAYFLLKLAGRWPVKTIHTDNGSNFTSTTVKAACWWAGIKQEFGIPYNPQSQGVVESMNKELKKIIGQVRDQAEHLKTAVQMAVFIHNFKRKGGIGGYSAGERIVDIIASDIQTKELQKQITKIQNFRVYYRDSRDPLWKGPAKLLWKGEGAVVIQDNSDIKVVPRRKAKIIRDYGKQMAGDDCVASRQDED.

G2 is lipidated: N-myristoyl glycine; by host. An interaction with Gp41 region spans residues 7–31 (VLSGGELDRWEKIRLRPGGKKKYKL). Positions 8-43 (LSGGELDRWEKIRLRPGGKKKYKLKHIVWASRELER) are interaction with host CALM1. The interaction with host AP3D1 stretch occupies residues 12-19 (ELDRWEKI). An interaction with membrane phosphatidylinositol 4,5-bisphosphate and RNA region spans residues 14–33 (DRWEKIRLRPGGKKKYKLKH). The short motif at 16 to 22 (WEKIRLR) is the Nuclear export signal element. A Nuclear localization signal motif is present at residues 26–32 (KKKYKLK). An interaction with membrane phosphatidylinositol 4,5-bisphosphate region spans residues 73 to 77 (EELKS). Positions 106-127 (EEQNKSKKKAQQAAADTGNSSQ) are disordered. The residue at position 132 (Y132) is a Phosphotyrosine; by host. Residues 189–227 (NTVGGHQAAMQMLKETINEEAAEWDRLHPVQAGPVAPGQ) form an interaction with human PPIA/CYPA and NUP153 region. The dimerization/Multimerization of capsid protein p24 stretch occupies residues 277 to 363 (YSPSSILDIK…GGPGHKARVL (87 aa)). 2 CCHC-type zinc fingers span residues 390-407 (VKCF…NCRA) and 411-428 (KGCW…DCTE). A dimerization of protease region spans residues 489–493 (PQITL). Residues 508-577 (KEALLDTGAD…TPVNIIGRNL (70 aa)) form the Peptidase A2 domain. D513 serves as the catalytic For protease activity; shared with dimeric partner. 2 dimerization of protease regions span residues 537 to 543 (GIGGFIK) and 576 to 588 (NLLT…LNFP). A Reverse transcriptase domain is found at 631–821 (EGKISKIGPE…PPFLWMGYEL (191 aa)). Residues D697, D772, and D773 each contribute to the Mg(2+) site. Positions 814–822 (FLWMGYELH) are RT 'primer grip'. A Tryptophan repeat motif motif is present at residues 985 to 1001 (WEAWWTDYWQATWIPEW). An RNase H type-1 domain is found at 1021 to 1144 (IVGAETFYVD…VDKLVSAGIR (124 aa)). Mg(2+) contacts are provided by D1030, E1065, D1085, and D1136. Residues 1150-1191 (DGIDKAQEEHEKYHTNWRAMASDFNLPPVVAKEIVASCNKCQ) form an Integrase-type zinc finger. Residues H1159, H1163, C1187, and C1190 each coordinate Zn(2+). Positions 1201–1351 (VDCSPGIWQL…SAGERIVDII (151 aa)) constitute an Integrase catalytic domain. D1211, D1263, and E1299 together coordinate Mg(2+). A DNA-binding region (integrase-type) is located at residues 1370-1417 (FRVYYRDSRDPLWKGPAKLLWKGEGAVVIQDNSDIKVVPRRKAKIIRD).

Homotrimer; further assembles as hexamers of trimers. Interacts with gp41 (via C-terminus). Interacts with host CALM1; this interaction induces a conformational change in the Matrix protein, triggering exposure of the myristate group. Interacts with host AP3D1; this interaction allows the polyprotein trafficking to multivesicular bodies during virus assembly. Part of the pre-integration complex (PIC) which is composed of viral genome, matrix protein, Vpr and integrase. In terms of assembly, homodimer; the homodimer further multimerizes as homohexamers or homopentamers. Interacts with human PPIA/CYPA; This interaction stabilizes the capsid. Interacts with human NUP153. Interacts with host PDZD8; this interaction stabilizes the capsid. Interacts with monkey TRIM5; this interaction destabilizes the capsid. As to quaternary structure, homodimer, whose active site consists of two apposed aspartic acid residues. Heterodimer of p66 RT and p51 RT (RT p66/p51). Heterodimerization of RT is essential for DNA polymerase activity. The overall folding of the subdomains is similar in p66 RT and p51 RT but the spatial arrangements of the subdomains are dramatically different. In terms of assembly, homotetramer; may further associate as a homohexadecamer. Part of the pre-integration complex (PIC) which is composed of viral genome, matrix protein, Vpr and integrase. Interacts with human SMARCB1/INI1 and human PSIP1/LEDGF isoform 1. Interacts with human KPNA3; this interaction might play a role in nuclear import of the pre-integration complex. Interacts with human NUP153; this interaction might play a role in nuclear import of the pre-integration complex. It depends on Mg(2+) as a cofactor. In terms of processing, specific enzymatic cleavages by the viral protease yield mature proteins. The protease is released by autocatalytic cleavage. The polyprotein is cleaved during and after budding, this process is termed maturation. Proteolytic cleavage of p66 RT removes the RNase H domain to yield the p51 RT subunit. Nucleocapsid protein p7 might be further cleaved after virus entry. Tyrosine phosphorylated presumably in the virion by a host kinase. Phosphorylation is apparently not a major regulator of membrane association. Post-translationally, phosphorylated possibly by host MAPK1; this phosphorylation is necessary for Pin1-mediated virion uncoating. In terms of processing, methylated by host PRMT6, impairing its function by reducing RNA annealing and the initiation of reverse transcription.

The protein resides in the host cell membrane. Its subcellular location is the host endosome. The protein localises to the host multivesicular body. It is found in the virion membrane. It localises to the host nucleus. The protein resides in the host cytoplasm. Its subcellular location is the virion. It catalyses the reaction Specific for a P1 residue that is hydrophobic, and P1' variable, but often Pro.. It carries out the reaction Endohydrolysis of RNA in RNA/DNA hybrids. Three different cleavage modes: 1. sequence-specific internal cleavage of RNA. Human immunodeficiency virus type 1 and Moloney murine leukemia virus enzymes prefer to cleave the RNA strand one nucleotide away from the RNA-DNA junction. 2. RNA 5'-end directed cleavage 13-19 nucleotides from the RNA end. 3. DNA 3'-end directed cleavage 15-20 nucleotides away from the primer terminus.. The catalysed reaction is 3'-end directed exonucleolytic cleavage of viral RNA-DNA hybrid.. The enzyme catalyses DNA(n) + a 2'-deoxyribonucleoside 5'-triphosphate = DNA(n+1) + diphosphate. Its activity is regulated as follows. Protease: The viral protease is inhibited by many synthetic protease inhibitors (PIs), such as amprenavir, atazanavir, indinavir, loprinavir, nelfinavir, ritonavir and saquinavir. Use of protease inhibitors in tritherapy regimens permit more ambitious therapeutic strategies. Reverse transcriptase/ribonuclease H: RT can be inhibited either by nucleoside RT inhibitors (NRTIs) or by non nucleoside RT inhibitors (NNRTIs). NRTIs act as chain terminators, whereas NNRTIs inhibit DNA polymerization by binding a small hydrophobic pocket near the RT active site and inducing an allosteric change in this region. Classical NRTIs are abacavir, adefovir (PMEA), didanosine (ddI), lamivudine (3TC), stavudine (d4T), tenofovir (PMPA), zalcitabine (ddC), and zidovudine (AZT). Classical NNRTIs are atevirdine (BHAP U-87201E), delavirdine, efavirenz (DMP-266), emivirine (I-EBU), and nevirapine (BI-RG-587). The tritherapies used as a basic effective treatment of AIDS associate two NRTIs and one NNRTI. Functionally, mediates, with Gag polyprotein, the essential events in virion assembly, including binding the plasma membrane, making the protein-protein interactions necessary to create spherical particles, recruiting the viral Env proteins, and packaging the genomic RNA via direct interactions with the RNA packaging sequence (Psi). Gag-Pol polyprotein may regulate its own translation, by the binding genomic RNA in the 5'-UTR. At low concentration, the polyprotein would promote translation, whereas at high concentration, the polyprotein would encapsidate genomic RNA and then shut off translation. Its function is as follows. Targets the polyprotein to the plasma membrane via a multipartite membrane-binding signal, that includes its myristoylated N-terminus. Matrix protein is part of the pre-integration complex. Implicated in the release from host cell mediated by Vpu. Binds to RNA. Forms the conical core that encapsulates the genomic RNA-nucleocapsid complex in the virion. Most core are conical, with only 7% tubular. The core is constituted by capsid protein hexamer subunits. The core is disassembled soon after virion entry. Host restriction factors such as TRIM5-alpha or TRIMCyp bind retroviral capsids and cause premature capsid disassembly, leading to blocks in reverse transcription. Capsid restriction by TRIM5 is one of the factors which restricts HIV-1 to the human species. Host PIN1 apparently facilitates the virion uncoating. On the other hand, interactions with PDZD8 or CYPA stabilize the capsid. In terms of biological role, encapsulates and protects viral dimeric unspliced genomic RNA (gRNA). Binds these RNAs through its zinc fingers. Acts as a nucleic acid chaperone which is involved in rearangement of nucleic acid secondary structure during gRNA retrotranscription. Also facilitates template switch leading to recombination. As part of the polyprotein, participates in gRNA dimerization, packaging, tRNA incorporation and virion assembly. Functionally, aspartyl protease that mediates proteolytic cleavages of Gag and Gag-Pol polyproteins during or shortly after the release of the virion from the plasma membrane. Cleavages take place as an ordered, step-wise cascade to yield mature proteins. This process is called maturation. Displays maximal activity during the budding process just prior to particle release from the cell. Also cleaves Nef and Vif, probably concomitantly with viral structural proteins on maturation of virus particles. Hydrolyzes host EIF4GI and PABP1 in order to shut off the capped cellular mRNA translation. The resulting inhibition of cellular protein synthesis serves to ensure maximal viral gene expression and to evade host immune response. Also mediates cleavage of host YTHDF3. Mediates cleavage of host CARD8, thereby activating the CARD8 inflammasome, leading to the clearance of latent HIV-1 in patient CD4(+) T-cells after viral reactivation; in contrast, HIV-1 can evade CARD8-sensing when its protease remains inactive in infected cells prior to viral budding. Its function is as follows. Multifunctional enzyme that converts the viral RNA genome into dsDNA in the cytoplasm, shortly after virus entry into the cell. This enzyme displays a DNA polymerase activity that can copy either DNA or RNA templates, and a ribonuclease H (RNase H) activity that cleaves the RNA strand of RNA-DNA heteroduplexes in a partially processive 3' to 5' endonucleasic mode. Conversion of viral genomic RNA into dsDNA requires many steps. A tRNA(3)-Lys binds to the primer-binding site (PBS) situated at the 5'-end of the viral RNA. RT uses the 3' end of the tRNA primer to perform a short round of RNA-dependent minus-strand DNA synthesis. The reading proceeds through the U5 region and ends after the repeated (R) region which is present at both ends of viral RNA. The portion of the RNA-DNA heteroduplex is digested by the RNase H, resulting in a ssDNA product attached to the tRNA primer. This ssDNA/tRNA hybridizes with the identical R region situated at the 3' end of viral RNA. This template exchange, known as minus-strand DNA strong stop transfer, can be either intra- or intermolecular. RT uses the 3' end of this newly synthesized short ssDNA to perform the RNA-dependent minus-strand DNA synthesis of the whole template. RNase H digests the RNA template except for two polypurine tracts (PPTs) situated at the 5'-end and near the center of the genome. It is not clear if both polymerase and RNase H activities are simultaneous. RNase H probably can proceed both in a polymerase-dependent (RNA cut into small fragments by the same RT performing DNA synthesis) and a polymerase-independent mode (cleavage of remaining RNA fragments by free RTs). Secondly, RT performs DNA-directed plus-strand DNA synthesis using the PPTs that have not been removed by RNase H as primers. PPTs and tRNA primers are then removed by RNase H. The 3' and 5' ssDNA PBS regions hybridize to form a circular dsDNA intermediate. Strand displacement synthesis by RT to the PBS and PPT ends produces a blunt ended, linear dsDNA copy of the viral genome that includes long terminal repeats (LTRs) at both ends. Catalyzes viral DNA integration into the host chromosome, by performing a series of DNA cutting and joining reactions. This enzyme activity takes place after virion entry into a cell and reverse transcription of the RNA genome in dsDNA. The first step in the integration process is 3' processing. This step requires a complex comprising the viral genome, matrix protein, Vpr and integrase. This complex is called the pre-integration complex (PIC). The integrase protein removes 2 nucleotides from each 3' end of the viral DNA, leaving recessed CA OH's at the 3' ends. In the second step, the PIC enters cell nucleus. This process is mediated through integrase and Vpr proteins, and allows the virus to infect a non dividing cell. This ability to enter the nucleus is specific of lentiviruses, other retroviruses cannot and rely on cell division to access cell chromosomes. In the third step, termed strand transfer, the integrase protein joins the previously processed 3' ends to the 5' ends of strands of target cellular DNA at the site of integration. The 5'-ends are produced by integrase-catalyzed staggered cuts, 5 bp apart. A Y-shaped, gapped, recombination intermediate results, with the 5'-ends of the viral DNA strands and the 3' ends of target DNA strands remaining unjoined, flanking a gap of 5 bp. The last step is viral DNA integration into host chromosome. This involves host DNA repair synthesis in which the 5 bp gaps between the unjoined strands are filled in and then ligated. Since this process occurs at both cuts flanking the HIV genome, a 5 bp duplication of host DNA is produced at the ends of HIV-1 integration. Alternatively, Integrase may catalyze the excision of viral DNA just after strand transfer, this is termed disintegration. The protein is Gag-Pol polyprotein (gag-pol) of Human immunodeficiency virus type 1 group M subtype B (strain 89.6) (HIV-1).